A 157-amino-acid polypeptide reads, in one-letter code: Nascent polypeptide-associated complex subunit beta (157 aa).

A disordered region spans residues methionine 1–lysine 31. Residues glutamate 33 to isoleucine 98 form the NAC-A/B domain. Positions asparagine 125–glutamate 157 are disordered. Residues glycine 130–glutamate 139 show a composition bias toward low complexity.

This sequence belongs to the NAC-beta family. In terms of assembly, part of the nascent polypeptide-associated complex (NAC), consisting of EGD2 and EGD1. NAC associates with ribosomes via EGD1.

It localises to the cytoplasm. It is found in the nucleus. Component of the nascent polypeptide-associated complex (NAC), a dynamic component of the ribosomal exit tunnel, protecting the emerging polypeptides from interaction with other cytoplasmic proteins to ensure appropriate nascent protein targeting. The NAC complex also promotes mitochondrial protein import by enhancing productive ribosome interactions with the outer mitochondrial membrane and blocks the inappropriate interaction of ribosomes translating non-secretory nascent polypeptides with translocation sites in the membrane of the endoplasmic reticulum. EGD1 may act as a transcription factor that exert a negative effect on the expression of several genes that are transcribed by RNA polymerase II. The sequence is that of Nascent polypeptide-associated complex subunit beta (EGD1) from Lodderomyces elongisporus (strain ATCC 11503 / CBS 2605 / JCM 1781 / NBRC 1676 / NRRL YB-4239) (Yeast).